Consider the following 156-residue polypeptide: Probable histone H2A.6 (156 aa).

Disordered stretches follow at residues 1–26 and 129–156; these read MDVG…KKPV and KKTA…QARS. Basic residues predominate over residues 9 to 26; it reads AAKKAVGRKLGGPKKKPV. A compositionally biased stretch (basic and acidic residues) spans 130-147; it reads KTAEKADKPAKASKDKAA. The SPKK motif signature appears at 149 to 152; it reads SPKK.

The protein belongs to the histone H2A family. The nucleosome is a histone octamer containing two molecules each of H2A, H2B, H3 and H4 assembled in one H3-H4 heterotetramer and two H2A-H2B heterodimers. The octamer wraps approximately 147 bp of DNA.

The protein resides in the nucleus. It localises to the chromosome. Core component of nucleosome. Nucleosomes wrap and compact DNA into chromatin, limiting DNA accessibility to the cellular machineries which require DNA as a template. Histones thereby play a central role in transcription regulation, DNA repair, DNA replication and chromosomal stability. DNA accessibility is regulated via a complex set of post-translational modifications of histones, also called histone code, and nucleosome remodeling. The sequence is that of Probable histone H2A.6 from Oryza sativa subsp. indica (Rice).